The chain runs to 287 residues: Pantothenate synthetase (287 aa).

30 to 37 (MGALHEGH) is an ATP binding site. The active-site Proton donor is the His37. Gln61 contacts (R)-pantoate. Residue Gln61 coordinates beta-alanine. 147 to 150 (GEKD) provides a ligand contact to ATP. Residue Gln153 coordinates (R)-pantoate. Residue 184–187 (MSSR) participates in ATP binding.

This sequence belongs to the pantothenate synthetase family. Homodimer.

It is found in the cytoplasm. It catalyses the reaction (R)-pantoate + beta-alanine + ATP = (R)-pantothenate + AMP + diphosphate + H(+). It participates in cofactor biosynthesis; (R)-pantothenate biosynthesis; (R)-pantothenate from (R)-pantoate and beta-alanine: step 1/1. Its function is as follows. Catalyzes the condensation of pantoate with beta-alanine in an ATP-dependent reaction via a pantoyl-adenylate intermediate. This is Pantothenate synthetase from Granulibacter bethesdensis (strain ATCC BAA-1260 / CGDNIH1).